The following is a 907-amino-acid chain: Protein translocase subunit SecA (907 aa).

ATP is bound by residues Gln-87, 105-109 (GEGKT), and Asp-512. The tract at residues 834 to 907 (QEDVERMEEQ…KKYKQCHGKI (74 aa)) is disordered. Composition is skewed to basic and acidic residues over residues 836–853 (DVERMEEQRRLQAEEAAR) and 873–888 (EEAHSPMVREERKVGR). 4 residues coordinate Zn(2+): Cys-892, Cys-894, Cys-903, and His-904. A compositionally biased stretch (basic residues) spans 898–907 (KKYKQCHGKI).

This sequence belongs to the SecA family. In terms of assembly, monomer and homodimer. Part of the essential Sec protein translocation apparatus which comprises SecA, SecYEG and auxiliary proteins SecDF-YajC and YidC. Requires Zn(2+) as cofactor.

It is found in the cell inner membrane. It localises to the cytoplasm. The enzyme catalyses ATP + H2O + cellular proteinSide 1 = ADP + phosphate + cellular proteinSide 2.. Its function is as follows. Part of the Sec protein translocase complex. Interacts with the SecYEG preprotein conducting channel. Has a central role in coupling the hydrolysis of ATP to the transfer of proteins into and across the cell membrane, serving both as a receptor for the preprotein-SecB complex and as an ATP-driven molecular motor driving the stepwise translocation of polypeptide chains across the membrane. The protein is Protein translocase subunit SecA of Aliivibrio fischeri (strain ATCC 700601 / ES114) (Vibrio fischeri).